Here is a 257-residue protein sequence, read N- to C-terminus: NAD-capped RNA hydrolase NudC (257 aa).

K25 and R69 together coordinate substrate. Residues C98 and C101 each contribute to the Zn(2+) site. E111 lines the substrate pocket. Residues C116 and C119 each coordinate Zn(2+). Y124 lines the substrate pocket. In terms of domain architecture, Nudix hydrolase spans 125–248; that stretch reads PQIAPCIIVA…TVARRLIEDT (124 aa). A divalent metal cation contacts are provided by A158, E174, and E178. Positions 159–180 match the Nudix box motif; that stretch reads GFVEVGETLEQAVAREVMEESG. Residue 192–199 coordinates substrate; sequence QPWPFPQS. E219 is an a divalent metal cation binding site. A241 is a substrate binding site.

This sequence belongs to the Nudix hydrolase family. NudC subfamily. In terms of assembly, homodimer. The cofactor is Mg(2+). Mn(2+) serves as cofactor. Requires Zn(2+) as cofactor.

It catalyses the reaction a 5'-end NAD(+)-phospho-ribonucleoside in mRNA + H2O = a 5'-end phospho-adenosine-phospho-ribonucleoside in mRNA + beta-nicotinamide D-ribonucleotide + 2 H(+). The enzyme catalyses NAD(+) + H2O = beta-nicotinamide D-ribonucleotide + AMP + 2 H(+). The catalysed reaction is NADH + H2O = reduced beta-nicotinamide D-ribonucleotide + AMP + 2 H(+). Functionally, mRNA decapping enzyme that specifically removes the nicotinamide adenine dinucleotide (NAD) cap from a subset of mRNAs by hydrolyzing the diphosphate linkage to produce nicotinamide mononucleotide (NMN) and 5' monophosphate mRNA. The NAD-cap is present at the 5'-end of some mRNAs and stabilizes RNA against 5'-processing. Has preference for mRNAs with a 5'-end purine. Catalyzes the hydrolysis of a broad range of dinucleotide pyrophosphates. The chain is NAD-capped RNA hydrolase NudC from Escherichia coli O7:K1 (strain IAI39 / ExPEC).